A 306-amino-acid chain; its full sequence is Curved DNA-binding protein (306 aa).

A J domain is found at 5–69 (DYYAIMGVKP…QRRAEYDQLW (65 aa)).

It localises to the cytoplasm. The protein resides in the nucleoid. DNA-binding protein that preferentially recognizes a curved DNA sequence. It is probably a functional analog of DnaJ; displays overlapping activities with DnaJ, but functions under different conditions, probably acting as a molecular chaperone in an adaptive response to environmental stresses other than heat shock. Lacks autonomous chaperone activity; binds native substrates and targets them for recognition by DnaK. Its activity is inhibited by the binding of CbpM. The sequence is that of Curved DNA-binding protein from Salmonella paratyphi A (strain ATCC 9150 / SARB42).